A 329-amino-acid chain; its full sequence is 4-hydroxythreonine-4-phosphate dehydrogenase (329 aa).

Positions 136 and 137 each coordinate substrate. Histidine 166, histidine 211, and histidine 266 together coordinate a divalent metal cation. The substrate site is built by lysine 274, asparagine 283, and arginine 292.

The protein belongs to the PdxA family. In terms of assembly, homodimer. Requires Zn(2+) as cofactor. The cofactor is Mg(2+). It depends on Co(2+) as a cofactor.

The protein localises to the cytoplasm. The catalysed reaction is 4-(phosphooxy)-L-threonine + NAD(+) = 3-amino-2-oxopropyl phosphate + CO2 + NADH. It functions in the pathway cofactor biosynthesis; pyridoxine 5'-phosphate biosynthesis; pyridoxine 5'-phosphate from D-erythrose 4-phosphate: step 4/5. Functionally, catalyzes the NAD(P)-dependent oxidation of 4-(phosphooxy)-L-threonine (HTP) into 2-amino-3-oxo-4-(phosphooxy)butyric acid which spontaneously decarboxylates to form 3-amino-2-oxopropyl phosphate (AHAP). This is 4-hydroxythreonine-4-phosphate dehydrogenase from Pseudomonas putida (strain ATCC 47054 / DSM 6125 / CFBP 8728 / NCIMB 11950 / KT2440).